Reading from the N-terminus, the 293-residue chain is Histamine N-methyltransferase (293 aa).

Glu28 is a binding site for substrate. Gly60, Glu89, Gln94, Ser120, and Ile142 together coordinate S-adenosyl-L-methionine. A substrate-binding site is contributed by Asn283.

Belongs to the class I-like SAM-binding methyltransferase superfamily. HNMT family. In terms of assembly, monomer.

Its subcellular location is the cytoplasm. It catalyses the reaction histamine + S-adenosyl-L-methionine = N(tau)-methylhistamine + S-adenosyl-L-homocysteine + H(+). In terms of biological role, inactivates histamine by N-methylation. Plays an important role in degrading histamine and in regulating the airway response to histamine. This is Histamine N-methyltransferase (hnmt) from Xenopus tropicalis (Western clawed frog).